We begin with the raw amino-acid sequence, 200 residues long: Protein GrpE (200 aa).

The protein belongs to the GrpE family. As to quaternary structure, homodimer.

It localises to the cytoplasm. Participates actively in the response to hyperosmotic and heat shock by preventing the aggregation of stress-denatured proteins, in association with DnaK and GrpE. It is the nucleotide exchange factor for DnaK and may function as a thermosensor. Unfolded proteins bind initially to DnaJ; upon interaction with the DnaJ-bound protein, DnaK hydrolyzes its bound ATP, resulting in the formation of a stable complex. GrpE releases ADP from DnaK; ATP binding to DnaK triggers the release of the substrate protein, thus completing the reaction cycle. Several rounds of ATP-dependent interactions between DnaJ, DnaK and GrpE are required for fully efficient folding. The polypeptide is Protein GrpE (Shewanella piezotolerans (strain WP3 / JCM 13877)).